The following is an 86-amino-acid chain: Small ribosomal subunit protein eS27y (86 aa).

The C4-type zinc finger occupies 39–61 (CQGCFNITTVFSHSQTVVVCGNC).

Belongs to the eukaryotic ribosomal protein eS27 family. The cofactor is Zn(2+).

Functionally, may be involved in the elimination of damaged mRNA after UV irradiation. The chain is Small ribosomal subunit protein eS27y (RPS27B) from Arabidopsis thaliana (Mouse-ear cress).